The sequence spans 419 residues: Tyrosine--tRNA ligase 2 (419 aa).

An L-tyrosine-binding site is contributed by Tyr34. Positions 39–48 match the 'HIGH' region motif; the sequence is PTGDSMHIGH. The L-tyrosine site is built by Tyr168 and Gln172. A 'KMSKS' region motif is present at residues 230 to 234; that stretch reads KFGKS. Residue Lys233 coordinates ATP. The S4 RNA-binding domain occupies 352-418; that stretch reads KNIVEWLVDL…GKKNYSLVKL (67 aa).

Belongs to the class-I aminoacyl-tRNA synthetase family. TyrS type 1 subfamily. Homodimer.

It localises to the cytoplasm. The catalysed reaction is tRNA(Tyr) + L-tyrosine + ATP = L-tyrosyl-tRNA(Tyr) + AMP + diphosphate + H(+). Catalyzes the attachment of tyrosine to tRNA(Tyr) in a two-step reaction: tyrosine is first activated by ATP to form Tyr-AMP and then transferred to the acceptor end of tRNA(Tyr). This Bacillus cereus (strain ATCC 10987 / NRS 248) protein is Tyrosine--tRNA ligase 2.